We begin with the raw amino-acid sequence, 572 residues long: Chaperonin CPN60-like 2, mitochondrial (572 aa).

The transit peptide at 1 to 31 directs the protein to the mitochondrion; that stretch reads MYRVLSKLSSSIGSSTSRKLVSGRIISSRNY.

Belongs to the chaperonin (HSP60) family.

It localises to the mitochondrion. Implicated in mitochondrial protein import and macromolecular assembly. May facilitate the correct folding of imported proteins. May also prevent misfolding and promote the refolding and proper assembly of unfolded polypeptides generated under stress conditions in the mitochondrial matrix. The polypeptide is Chaperonin CPN60-like 2, mitochondrial (Arabidopsis thaliana (Mouse-ear cress)).